The following is a 313-amino-acid chain: Protein FixB (313 aa).

255 to 283 (LYLAVGISGQIQHMVGANASQTIFAINKD) is an FAD binding site.

The protein belongs to the ETF alpha-subunit/FixB family. Heterodimer of FixA and FixB.

It functions in the pathway amine and polyamine metabolism; carnitine metabolism. In terms of biological role, required for anaerobic carnitine reduction. May bring reductant to CaiA. The sequence is that of Protein FixB from Escherichia coli (strain 55989 / EAEC).